The sequence spans 251 residues: CDP-diacylglycerol pyrophosphatase (251 aa).

Residues 4-24 (AGLLFLVMIVIAVVAAGIGYW) form a helical membrane-spanning segment.

This sequence belongs to the Cdh family.

The protein localises to the cell inner membrane. It catalyses the reaction a CDP-1,2-diacyl-sn-glycerol + H2O = a 1,2-diacyl-sn-glycero-3-phosphate + CMP + 2 H(+). Its pathway is phospholipid metabolism; CDP-diacylglycerol degradation; phosphatidate from CDP-diacylglycerol: step 1/1. The protein is CDP-diacylglycerol pyrophosphatase of Shigella boydii serotype 4 (strain Sb227).